We begin with the raw amino-acid sequence, 307 residues long: MRIVFAGTPAPALPSLERLLASRHEVVAVLTRPDARAGRGRASASSPVAALAREHGVAVLTPARPNEPEFVRELAQLDVDCCAVVAYGALLKPELLAVPRLGWVNLHFSLLPAWRGAAPVQASIAAGDEITGATTFLIEPALDSGPVYGVVTERISPNDTAGALLGRLAESGAGLLESTMDGIEDGALVAVPQAVDGVSIAPKITVEQARIRWELPAHAIDRHIRAMTPEPGAWTNIGGTRVKVGPVGVATDEQLPPGAVAVRKRDVLVGTGTTAIALDEVQPQGKKVMKAADWARGARLDAEVHAL.

109–112 (SLLP) lines the (6S)-5,6,7,8-tetrahydrofolate pocket.

It belongs to the Fmt family.

It catalyses the reaction L-methionyl-tRNA(fMet) + (6R)-10-formyltetrahydrofolate = N-formyl-L-methionyl-tRNA(fMet) + (6S)-5,6,7,8-tetrahydrofolate + H(+). Its function is as follows. Attaches a formyl group to the free amino group of methionyl-tRNA(fMet). The formyl group appears to play a dual role in the initiator identity of N-formylmethionyl-tRNA by promoting its recognition by IF2 and preventing the misappropriation of this tRNA by the elongation apparatus. The polypeptide is Methionyl-tRNA formyltransferase (Mycobacteroides abscessus (strain ATCC 19977 / DSM 44196 / CCUG 20993 / CIP 104536 / JCM 13569 / NCTC 13031 / TMC 1543 / L948) (Mycobacterium abscessus)).